The primary structure comprises 1121 residues: Putative ATP-dependent RNA helicase ECM32 (1121 aa).

The tract at residues 157 to 187 is disordered; it reads NSTRKPRKKGGRRVGRGKKGRKGAKIKKEKK. The segment covering 160–184 has biased composition (basic residues); that stretch reads RKPRKKGGRRVGRGKKGRKGAKIKK. S227 is subject to Phosphoserine. Residues 233 to 452 form a disordered region; sequence AKVSKSETSR…NQEKNNGKTK (220 aa). Residues 251-263 are compositionally biased toward basic residues; that stretch reads NKGKGNKANHKKN. Positions 278–287 are enriched in polar residues; it reads IRNNVRNSQP. The segment covering 307-316 has biased composition (basic and acidic residues); the sequence is GKNESVDKHQ. Low complexity predominate over residues 323-336; sequence LNGNGSGSTNTTGL. Residues 342–363 show a composition bias toward basic and acidic residues; it reads DHAGQKTKGNDKTGNKNPREAK. Positions 376–413 are enriched in polar residues; it reads KSNNQPNKGTSRWTIGSDTESSREPSISPNENTTSITK. A Phosphoserine modification is found at S392. Residues 426–452 are compositionally biased toward basic and acidic residues; it reads LNEKSKTTTMPKKLETKNQEKNNGKTK. T465 is modified (phosphothreonine). An ATP-binding site is contributed by 670 to 677; it reads GPPGTGKT.

Belongs to the DNA2/NAM7 helicase family. In terms of assembly, interacts with the peptidyl release factors SUP35 and weakly with SUP45.

Its subcellular location is the cytoplasm. It catalyses the reaction ATP + H2O = ADP + phosphate + H(+). Probable RNA helicase, which may be involved in modulation of the translation termination process. Probably unwinds double-stranded RNA. In vitro, unwinds covalently closed, circular DNA in the presence of a DNA topoisomerase TOP1 and replication factor-A protein RFA1. The chain is Putative ATP-dependent RNA helicase ECM32 (ECM32) from Saccharomyces cerevisiae (strain ATCC 204508 / S288c) (Baker's yeast).